The primary structure comprises 85 residues: Kappa-theraphotoxin-Cg1d (85 aa).

An N-terminal signal peptide occupies residues 1-21 (MKVSVLITLAVLGVMFVWASA). Residues 22–51 (AELEERGSDQRDSPAWLKSMERIFQSEERE) constitute a propeptide that is removed on maturation. Intrachain disulfides connect Cys-52-Cys-66, Cys-59-Cys-71, and Cys-65-Cys-78.

It belongs to the neurotoxin 10 (Hwtx-1) family. 28 (Jztx-11) subfamily. Expressed by the venom gland.

The protein localises to the secreted. In terms of biological role, probable ion channel inhibitor. The chain is Kappa-theraphotoxin-Cg1d from Chilobrachys guangxiensis (Chinese earth tiger tarantula).